The sequence spans 93 residues: Small ribosomal subunit protein uS19 (93 aa).

It belongs to the universal ribosomal protein uS19 family.

Its function is as follows. Protein S19 forms a complex with S13 that binds strongly to the 16S ribosomal RNA. In Helicobacter acinonychis (strain Sheeba), this protein is Small ribosomal subunit protein uS19.